Reading from the N-terminus, the 297-residue chain is UDP-N-acetylenolpyruvoylglucosamine reductase (297 aa).

In terms of domain architecture, FAD-binding PCMH-type spans R22–G195. R169 is a catalytic residue. The active-site Proton donor is S223. E293 is an active-site residue.

The protein belongs to the MurB family. FAD is required as a cofactor.

The protein localises to the cytoplasm. It catalyses the reaction UDP-N-acetyl-alpha-D-muramate + NADP(+) = UDP-N-acetyl-3-O-(1-carboxyvinyl)-alpha-D-glucosamine + NADPH + H(+). It functions in the pathway cell wall biogenesis; peptidoglycan biosynthesis. Functionally, cell wall formation. This Chloroflexus aurantiacus (strain ATCC 29364 / DSM 637 / Y-400-fl) protein is UDP-N-acetylenolpyruvoylglucosamine reductase.